The sequence spans 266 residues: 4-hydroxy-tetrahydrodipicolinate reductase (266 aa).

An NAD(+)-binding site is contributed by 10-15; sequence GPRGRM. NADP(+) is bound at residue Lys-38. NAD(+) contacts are provided by residues 99-101 and 125-128; these read GTT and APNF. Residue His-155 is the Proton donor/acceptor of the active site. Residue His-156 participates in (S)-2,3,4,5-tetrahydrodipicolinate binding. Lys-159 serves as the catalytic Proton donor. 165-166 provides a ligand contact to (S)-2,3,4,5-tetrahydrodipicolinate; the sequence is GT.

Belongs to the DapB family.

It localises to the cytoplasm. The catalysed reaction is (S)-2,3,4,5-tetrahydrodipicolinate + NAD(+) + H2O = (2S,4S)-4-hydroxy-2,3,4,5-tetrahydrodipicolinate + NADH + H(+). It carries out the reaction (S)-2,3,4,5-tetrahydrodipicolinate + NADP(+) + H2O = (2S,4S)-4-hydroxy-2,3,4,5-tetrahydrodipicolinate + NADPH + H(+). It functions in the pathway amino-acid biosynthesis; L-lysine biosynthesis via DAP pathway; (S)-tetrahydrodipicolinate from L-aspartate: step 4/4. In terms of biological role, catalyzes the conversion of 4-hydroxy-tetrahydrodipicolinate (HTPA) to tetrahydrodipicolinate. This chain is 4-hydroxy-tetrahydrodipicolinate reductase, found in Bacillus cereus (strain B4264).